The following is a 201-amino-acid chain: LexA repressor (201 aa).

The segment at residues 28–48 (RAEIAARLGFRSPNAAEEHLK) is a DNA-binding region (H-T-H motif). Catalysis depends on for autocatalytic cleavage activity residues Ser118 and Lys155.

The protein belongs to the peptidase S24 family. Homodimer.

The catalysed reaction is Hydrolysis of Ala-|-Gly bond in repressor LexA.. Represses a number of genes involved in the response to DNA damage (SOS response), including recA and lexA. In the presence of single-stranded DNA, RecA interacts with LexA causing an autocatalytic cleavage which disrupts the DNA-binding part of LexA, leading to derepression of the SOS regulon and eventually DNA repair. The polypeptide is LexA repressor (Photorhabdus laumondii subsp. laumondii (strain DSM 15139 / CIP 105565 / TT01) (Photorhabdus luminescens subsp. laumondii)).